The chain runs to 634 residues: Probable sulfate transporter 3.5 (634 aa).

A compositionally biased stretch (polar residues) spans 1-12 (MENTITSSTSSP). Residues 1–25 (MENTITSSTSSPKGRGVNFSTPRGF) are disordered. Residues 1–81 (MENTITSSTS…KYDMQKLKYD (81 aa)) are Cytoplasmic-facing. A helical membrane pass occupies residues 82 to 102 (VLAGITITSLAVPQGISYAKL). The Extracellular segment spans residues 103-104 (AS). The helical transmembrane segment at 105–125 (IPPIIGLYSSFVPPFVYAVFG) threads the bilayer. The Cytoplasmic portion of the chain corresponds to 126-130 (SSNNL). A helical membrane pass occupies residues 131–151 (AVGTVAACSLLIAETFGEEMI). The Extracellular portion of the chain corresponds to 152 to 158 (KNEPELY). Residues 159–179 (LHLIFTATLITGLFQFAMGFL) traverse the membrane as a helical segment. The Cytoplasmic segment spans residues 180 to 195 (RLGILVDFLSHSTITG). The helical transmembrane segment at 196–216 (FMGGTAIIILLQQLKGIFGLV) threads the bilayer. Over 217–239 (HFTHKTDVVSVLHSILDNRAEWK) the chain is Extracellular. Residues 240-260 (WQSTLAGVCFLVFLQSTRYIK) traverse the membrane as a helical segment. The Cytoplasmic segment spans residues 261–265 (QRYPK). A helical membrane pass occupies residues 266 to 286 (LFWVSAMGPMVVVVVGCVVAY). Over 287–321 (LVKGTAHGIATVGPLKKGLNPPSIQLLNFDSKYLG) the chain is Extracellular. Residues 322 to 342 (MVFKAGIVTGLIALAEGIAIG) traverse the membrane as a helical segment. Over 343 to 358 (RSFAVMKNEQTDGNKE) the chain is Cytoplasmic. A helical transmembrane segment spans residues 359–379 (MIAFGLMNVIGSFTSCYLTTG). The Extracellular portion of the chain corresponds to 380 to 395 (PFSKTAVNYNAGTKTP). Residues 396–416 (MSNVVMGVCMMLVLLFLAPLF) traverse the membrane as a helical segment. Over 417-420 (SYTP) the chain is Cytoplasmic. A helical membrane pass occupies residues 421–441 (LVGLSAIIMSAMLGLINYEEM). At 442–458 (YHLFKVDKFDFLVCMSA) the chain is on the extracellular side. Residues 459–479 (FFGVSFLSMDYGLIISVGFSI) traverse the membrane as a helical segment. Residues 480 to 634 (VRALLYVARP…FNLTTTKPEV (155 aa)) are Cytoplasmic-facing. Positions 508 to 623 (QYPASEEMLG…LSIDDAVQAC (116 aa)) constitute an STAS domain.

Belongs to the SLC26A/SulP transporter (TC 2.A.53) family.

The protein localises to the membrane. In terms of biological role, h(+)/sulfate cotransporter that may play a role in the regulation of sulfate assimilation. The protein is Probable sulfate transporter 3.5 (SULTR3;5) of Arabidopsis thaliana (Mouse-ear cress).